The primary structure comprises 394 residues: MTTKNRQIKNFTSNFGPQHPAAHGVSRSVLEMNGEVVERAEPHIGLLQRGTEKLIEYKTYLQALPYSDRSEYVSMMAQEHAHSSAVERLLNCEVPLRAQYIRVLFREITRISNHSLALTTHAMDVGASTPFLWAFEEREKLLEFYERVSGARMHASFIRPGGVAQDLPLGLCIDIDSFTQQFASRIDELEEMSTGNRIWKQRLVDIGTVTAQQAKDWGFSGVMLRGSGVCWDLRKAAPYDVHDQLDPDIPVGTRGDRYDRYCIRIEEMRQSVRIIVQCLNQMPSGMIKADDRKLCPPSRSRMKLSMESSIHHFEPYTEGFSVPAPSTYTAVEAPKGEFGVFLVSNGSNRPYRRKIRAPCFAHSQGLDSMSKHHMPADVVTIIGTQDIVSGEVDR.

Residues 1–16 show a composition bias toward polar residues; it reads MTTKNRQIKNFTSNFG. Positions 1-22 are disordered; the sequence is MTTKNRQIKNFTSNFGPQHPAA.

This sequence belongs to the complex I 49 kDa subunit family. In terms of assembly, complex I is composed of about 45 different subunits. This is a component of the iron-sulfur (IP) fragment of the enzyme.

It is found in the mitochondrion. It catalyses the reaction a ubiquinone + NADH + 5 H(+)(in) = a ubiquinol + NAD(+) + 4 H(+)(out). Functionally, core subunit of the mitochondrial membrane respiratory chain NADH dehydrogenase (Complex I) that is believed to belong to the minimal assembly required for catalysis. Complex I functions in the transfer of electrons from NADH to the respiratory chain. The immediate electron acceptor for the enzyme is believed to be ubiquinone. Component of the iron-sulfur (IP) fragment of the enzyme. The chain is NADH dehydrogenase [ubiquinone] iron-sulfur protein 2 (NAD7) from Nicotiana sylvestris (Wood tobacco).